The sequence spans 525 residues: MEIMESGDPVIQWDRKLSELSEAAESDSLYNNTPFSELLDDSALLDVLGQLMGDPFLTEKYEMMEVEMNPSSPSPMIKAEHSYSLCGDSRPQSPFTHASSDDNFSDTDLTGDDWCLNGELTATTPTTKIKVEIPLEETPGLTPSVTLATSAVSASPEVGVSSQLPVPEQVKLLSPVALPQIKLEPHEVDQFLNLCPKEVAPTEALQMPPTPPSSHGSDSEGGQSPTRSLPPSSPVQSQAGGKMAARSPSALSNSPLLTAPHKLQGSGPLMLTEEEKRTLVAEGYPIPTKLPLTKAEEKALKKIRRKIKNKISAQESRRKKKEYMDSLEKRVENSSSENSELRKKVEVLESTNRTLLQQLQRLQAMVTGKVTRSCKAAGTQTGTCLMMVVLCFAVIFGSFTQNLDMYSSSSKTIHEPSQYSAPESYAASIVRSRKLLIFEEHQAVEELHSSAVMLETQDTWEVQADTISKQQAALLEELHLSQEKPFSLSNDSSSDMPVRHRFTSEFGHNDTTKVIELDRTVNTTS.

Over 1 to 382 the chain is Cytoplasmic; it reads MEIMESGDPV…SCKAAGTQTG (382 aa). Disordered regions lie at residues 85 to 104, 203 to 267, and 309 to 338; these read LCGDSRPQSPFTHASSDDNF, EALQ…QGSG, and NKISAQESRRKKKEYMDSLEKRVENSSSEN. Composition is skewed to polar residues over residues 90–102 and 213–239; these read RPQSPFTHASSDD and SSHGSDSEGGQSPTRSLPPSSPVQSQA. The bZIP domain maps to 299–362; the sequence is ALKKIRRKIK…RTLLQQLQRL (64 aa). Positions 301 to 330 are basic motif; sequence KKIRRKIKNKISAQESRRKKKEYMDSLEKR. Over residues 322 to 332 the composition is skewed to basic and acidic residues; that stretch reads EYMDSLEKRVE. Residues 341–362 form a leucine-zipper region; the sequence is LRKKVEVLESTNRTLLQQLQRL. A helical; Signal-anchor for type II membrane protein membrane pass occupies residues 383–403; sequence TCLMMVVLCFAVIFGSFTQNL. The Lumenal segment spans residues 404–525; sequence DMYSSSSKTI…ELDRTVNTTS (122 aa). The short motif at 433 to 436 is the S1P recognition element; it reads RKLL. N-linked (GlcNAc...) asparagine glycosylation is found at asparagine 490, asparagine 509, and asparagine 522.

Belongs to the bZIP family. ATF subfamily. In terms of assembly, binds DNA as a dimer. Post-translationally, upon ER stress, translocated to the Golgi apparatus, where it is processed by regulated intramembrane proteolysis (RIP) to release the cytosol-facing N-terminal transcription factor domain. The cleavage is performed sequentially by site-1 and site-2 proteases (S1P/mbtps1 and S2P/mbtps2).

The protein resides in the endoplasmic reticulum membrane. It is found in the nucleus. In terms of biological role, transcription factor involved in unfolded protein response (UPR). In the absence of endoplasmic reticulum (ER) stress, inserted into ER membranes, with N-terminal DNA-binding and transcription activation domains oriented toward the cytosolic face of the membrane. In response to ER stress, transported to the Golgi, where it is cleaved in a site-specific manner by resident proteases S1P/mbtps1 and S2P/mbtps2. The released N-terminal cytosolic domain is translocated to the nucleus to effect transcription of specific target genes. Plays a critical role in chondrogenesis. May protect neuroblastoma cells from ER stress-induced death. In vitro activates transcription of target genes via direct binding to the CRE site. In Xenopus laevis (African clawed frog), this protein is Cyclic AMP-responsive element-binding protein 3-like protein 2 (creb3l2).